Here is a 274-residue protein sequence, read N- to C-terminus: MQQLQNVIETAFERRADITPANVDTVTREAINHVIDLLDTGALRVAEKIDGQWVTHQWLKKAVLLSFRINDNQVMEGAETRYYDKVPMKFAGYDEARFQREGFRVVPPATVRKGAFIARNTVLMPSYVNIGAFVDEGTMVDTWATVGSCAQIGKNVHLSGGVGIGGVLEPLQANPTIIEDNCFVGARSEVVEGVIVEEGSVISMGVFIGQSTRIYDRETGEIHYGRVPAGSVVVSGNLPSKDGSYSLYCAVIVKKVDAKTRGKVGINELLRTID.

Substrate contacts are provided by Arg-104 and Asp-141.

This sequence belongs to the transferase hexapeptide repeat family. As to quaternary structure, homotrimer.

It is found in the cytoplasm. It catalyses the reaction (S)-2,3,4,5-tetrahydrodipicolinate + succinyl-CoA + H2O = (S)-2-succinylamino-6-oxoheptanedioate + CoA. Its pathway is amino-acid biosynthesis; L-lysine biosynthesis via DAP pathway; LL-2,6-diaminopimelate from (S)-tetrahydrodipicolinate (succinylase route): step 1/3. This is 2,3,4,5-tetrahydropyridine-2,6-dicarboxylate N-succinyltransferase from Yersinia enterocolitica serotype O:8 / biotype 1B (strain NCTC 13174 / 8081).